Reading from the N-terminus, the 257-residue chain is Tryptophan synthase alpha chain (257 aa).

Residues E47 and D58 each act as proton acceptor in the active site.

It belongs to the TrpA family. Tetramer of two alpha and two beta chains.

It carries out the reaction (1S,2R)-1-C-(indol-3-yl)glycerol 3-phosphate + L-serine = D-glyceraldehyde 3-phosphate + L-tryptophan + H2O. It participates in amino-acid biosynthesis; L-tryptophan biosynthesis; L-tryptophan from chorismate: step 5/5. In terms of biological role, the alpha subunit is responsible for the aldol cleavage of indoleglycerol phosphate to indole and glyceraldehyde 3-phosphate. The polypeptide is Tryptophan synthase alpha chain (Listeria monocytogenes serotype 4b (strain F2365)).